The primary structure comprises 218 residues: Protein N-lysine methyltransferase METTL21A (218 aa).

Residues Trp47, 73-75 (GAG), Asp94, Trp125, and Ala143 each bind S-adenosyl-L-methionine.

Belongs to the methyltransferase superfamily. METTL21 family. Interacts with heat shock 70 family members; at least some of these proteins are methylation substrates.

The protein localises to the cytoplasm. It catalyses the reaction L-lysyl-[protein] + 3 S-adenosyl-L-methionine = N(6),N(6),N(6)-trimethyl-L-lysyl-[protein] + 3 S-adenosyl-L-homocysteine + 3 H(+). Protein-lysine methyltransferase that selectively trimethylates residues in heat shock protein 70 (HSP70) family members. Contributes to the in vivo trimethylation of Lys residues in HSPA1 and HSPA8. In vitro methylates 'Lys-561' in HSPA1, 'Lys-564' in HSPA2, 'Lys-585' in HSPA5, 'Lys-563' in HSPA6 and 'Lys-561' in HSPA8. In Bos taurus (Bovine), this protein is Protein N-lysine methyltransferase METTL21A (METTL21A).